The chain runs to 609 residues: ATP-dependent lipid A-core flippase (609 aa).

The next 6 membrane-spanning stretches (helical) occupy residues 47-67 (LLAAIGSIFFSAADASMIYLI), 88-108 (ILMLMGVGMVGLLALRSVGSF), 167-187 (AIITVVQDGTFVIGLIVVMFV), 190-210 (WQLSLFLIVVGPFLGLFISII), 279-299 (VIQIIASLVLAFSLFTIAIFG), and 305-325 (GSSWLTAGSFASFFAAAAAIL). Positions 47 to 340 (LLAAIGSIFF…LTKVNVVIQK (294 aa)) constitute an ABC transmembrane type-1 domain. An ABC transporter domain is found at 372-606 (VTIKDLSFAF…GGLYTRLYQS (235 aa)). 404–411 (GKSGSGKT) is an ATP binding site.

The protein belongs to the ABC transporter superfamily. Lipid exporter (TC 3.A.1.106) family. As to quaternary structure, homodimer.

It is found in the cell inner membrane. It catalyses the reaction ATP + H2O + lipid A-core oligosaccharideSide 1 = ADP + phosphate + lipid A-core oligosaccharideSide 2.. Its function is as follows. Involved in lipopolysaccharide (LPS) biosynthesis. Translocates lipid A-core from the inner to the outer leaflet of the inner membrane. Transmembrane domains (TMD) form a pore in the inner membrane and the ATP-binding domain (NBD) is responsible for energy generation. This Francisella tularensis subsp. tularensis (strain FSC 198) protein is ATP-dependent lipid A-core flippase.